Here is a 96-residue protein sequence, read N- to C-terminus: Small ribosomal subunit protein bS6 (96 aa).

The protein belongs to the bacterial ribosomal protein bS6 family.

Functionally, binds together with bS18 to 16S ribosomal RNA. The chain is Small ribosomal subunit protein bS6 from Carboxydothermus hydrogenoformans (strain ATCC BAA-161 / DSM 6008 / Z-2901).